Consider the following 701-residue polypeptide: Polyribonucleotide nucleotidyltransferase (701 aa).

The Mg(2+) site is built by aspartate 487 and aspartate 493. The KH domain maps to proline 554 to valine 613. The region spanning glycine 623 to lysine 691 is the S1 motif domain.

This sequence belongs to the polyribonucleotide nucleotidyltransferase family. As to quaternary structure, component of the RNA degradosome, which is a multiprotein complex involved in RNA processing and mRNA degradation. It depends on Mg(2+) as a cofactor.

The protein localises to the cytoplasm. The enzyme catalyses RNA(n+1) + phosphate = RNA(n) + a ribonucleoside 5'-diphosphate. Involved in mRNA degradation. Catalyzes the phosphorolysis of single-stranded polyribonucleotides processively in the 3'- to 5'-direction. The sequence is that of Polyribonucleotide nucleotidyltransferase from Pseudomonas syringae pv. syringae (strain B728a).